The primary structure comprises 62 residues: Large ribosomal subunit protein bL28 (62 aa).

The protein belongs to the bacterial ribosomal protein bL28 family.

This Caldanaerobacter subterraneus subsp. tengcongensis (strain DSM 15242 / JCM 11007 / NBRC 100824 / MB4) (Thermoanaerobacter tengcongensis) protein is Large ribosomal subunit protein bL28.